The primary structure comprises 94 residues: Co-chaperonin GroES (94 aa).

This sequence belongs to the GroES chaperonin family. As to quaternary structure, heptamer of 7 subunits arranged in a ring. Interacts with the chaperonin GroEL.

The protein localises to the cytoplasm. Functionally, together with the chaperonin GroEL, plays an essential role in assisting protein folding. The GroEL-GroES system forms a nano-cage that allows encapsulation of the non-native substrate proteins and provides a physical environment optimized to promote and accelerate protein folding. GroES binds to the apical surface of the GroEL ring, thereby capping the opening of the GroEL channel. The chain is Co-chaperonin GroES from Lactococcus lactis subsp. cremoris (strain SK11).